Here is a 142-residue protein sequence, read N- to C-terminus: Alpha-lactalbumin (142 aa).

The N-terminal stretch at 1–19 (MRFFVPLFLVGILFPAILA) is a signal peptide. Positions 20–142 (KQFTKCELSQ…KLEQWLCEKL (123 aa)) constitute a C-type lysozyme domain. 4 disulfide bridges follow: C25-C139, C47-C130, C80-C96, and C92-C110. Residues T57 and Q58 each coordinate Ca(2+). N64 carries an N-linked (GlcNAc...) asparagine glycan. E68 provides a ligand contact to Zn(2+). An N-linked (GlcNAc...) asparagine; atypical; partial glycan is attached at N90. Residues K98, L100, D101, D102, D103, D106, and D107 each coordinate Ca(2+). Zn(2+) is bound at residue E135.

It belongs to the glycosyl hydrolase 22 family. In terms of assembly, lactose synthase (LS) is a heterodimer of a catalytic component, beta1,4-galactosyltransferase (beta4Gal-T1) and a regulatory component, alpha-lactalbumin (LA). Mammary gland specific. Secreted in milk.

It is found in the secreted. Regulatory subunit of lactose synthase, changes the substrate specificity of galactosyltransferase in the mammary gland making glucose a good acceptor substrate for this enzyme. This enables LS to synthesize lactose, the major carbohydrate component of milk. In other tissues, galactosyltransferase transfers galactose onto the N-acetylglucosamine of the oligosaccharide chains in glycoproteins. In Homo sapiens (Human), this protein is Alpha-lactalbumin (LALBA).